A 99-amino-acid chain; its full sequence is uncharacterized protein (99 aa).

A helical membrane pass occupies residues 74–90 (FLSLPLGHSYLFLFCFW).

The protein resides in the membrane. This is an uncharacterized protein from Saccharomyces cerevisiae (strain ATCC 204508 / S288c) (Baker's yeast).